A 185-amino-acid chain; its full sequence is ATP-dependent protease subunit HslV (185 aa).

Thr12 is an active-site residue. Ser168, Cys171, and Thr174 together coordinate Na(+).

It belongs to the peptidase T1B family. HslV subfamily. A double ring-shaped homohexamer of HslV is capped on each side by a ring-shaped HslU homohexamer. The assembly of the HslU/HslV complex is dependent on binding of ATP.

It localises to the cytoplasm. The enzyme catalyses ATP-dependent cleavage of peptide bonds with broad specificity.. Allosterically activated by HslU binding. In terms of biological role, protease subunit of a proteasome-like degradation complex believed to be a general protein degrading machinery. This chain is ATP-dependent protease subunit HslV, found in Jannaschia sp. (strain CCS1).